Reading from the N-terminus, the 367-residue chain is CCN family member 4 (367 aa).

The signal sequence occupies residues 1–22; that stretch reads MRWLLPWTLAAVAVLMVGNILA. One can recognise an IGFBP N-terminal domain in the interval 45 to 118; the sequence is RPEFCKWPCE…RYAIGVCAQV (74 aa). Cystine bridges form between C49-C73, C53-C75, C55-C76, and C62-C79. N-linked (GlcNAc...) asparagine glycosylation is present at N86. Intrachain disulfides connect C87–C101 and C93–C115. One can recognise a VWFC domain in the interval 121–186; sequence VGCVLDGVRY…GQCCEQWVCD (66 aa). N143 carries N-linked (GlcNAc...) asparagine glycosylation. The TSP type-1 domain maps to 215 to 260; the sequence is NCIAYTSPWSPCSTTCGLGISTRISNVNARCWPEQESRLCNLRPCD. 5 disulfides stabilise this stretch: C273-C310, C290-C324, C301-C340, C304-C342, and C309-C346. The 75-residue stretch at 273–347 folds into the CTCK domain; it reads CLAVYQPEEA…NACFCNLSCR (75 aa). N284 carries an N-linked (GlcNAc...) asparagine glycan. N-linked (GlcNAc...) asparagine glycosylation occurs at N343.

It belongs to the CCN family.

The protein localises to the secreted. Functionally, downstream regulator in the Wnt/Frizzled-signaling pathway. Associated with cell survival. Adheres to skin and melanoma fibroblasts. In vitro binding to skin fibroblasts occurs through the proteoglycans, decorin and biglycan. The chain is CCN family member 4 (Ccn4) from Rattus norvegicus (Rat).